The sequence spans 287 residues: MSQKEIWYETLHANFGQYFSVDRVLYHEKTDHQDLIIFENDALGRVMALDGVVQTTERDEFIYHEMLTHVPLLSHGNAKRVLIIGGGDGGMLREVSRHHGVEQITMVEIDAGVVEFCRQYLPNHSAGSYDDPRFNLVIDDGVNFVRQCSEKFDVIISDCTDPIGPGESLFTSDFYQGCARSLNEGGIFVAQNGVCFLQQDEAIGSHKKLSHYFNDVSFYQAAIPTYYGGIMTFAWASNNPALRQMDIVTLRQHFAQSGITCRYYTPDVHIGSFALPQYLLSALQNAQ.

The PABS domain occupies 5–238 (EIWYETLHAN…GIMTFAWASN (234 aa)). Gln-33 serves as a coordination point for S-methyl-5'-thioadenosine. Residues His-64 and Asp-88 each contribute to the spermidine site. S-methyl-5'-thioadenosine-binding positions include Glu-108 and 140-141 (DG). Asp-158 functions as the Proton acceptor in the catalytic mechanism. 158-161 (DCTD) provides a ligand contact to spermidine. Pro-165 provides a ligand contact to S-methyl-5'-thioadenosine.

Belongs to the spermidine/spermine synthase family. In terms of assembly, homodimer or homotetramer.

Its subcellular location is the cytoplasm. The enzyme catalyses S-adenosyl 3-(methylsulfanyl)propylamine + putrescine = S-methyl-5'-thioadenosine + spermidine + H(+). The protein operates within amine and polyamine biosynthesis; spermidine biosynthesis; spermidine from putrescine: step 1/1. Functionally, catalyzes the irreversible transfer of a propylamine group from the amino donor S-adenosylmethioninamine (decarboxy-AdoMet) to putrescine (1,4-diaminobutane) to yield spermidine. The chain is Polyamine aminopropyltransferase from Pectobacterium atrosepticum (strain SCRI 1043 / ATCC BAA-672) (Erwinia carotovora subsp. atroseptica).